The sequence spans 470 residues: Dendritic cell-specific transmembrane protein (470 aa).

Topologically, residues 1 to 33 are cytoplasmic; sequence MRLWTLGTSIFLRLWGTYVFPRSPSWLDFIQHL. A helical transmembrane segment spans residues 34 to 54; it reads GVCCFVAFLSVSLFSAAFYWI. Leu-55 is a topological domain (extracellular). The chain crosses the membrane as a helical span at residues 56 to 76; that stretch reads PPVALLSSVWMITCVFLCCSK. At 77 to 97 the chain is on the cytoplasmic side; that stretch reads RARCFILLAVLSCGLREGRNA. A helical transmembrane segment spans residues 98–118; the sequence is LIAAGTGVVIFGHVENIFYNF. The Extracellular segment spans residues 119–209; sequence RGLLDSMTCN…MVVTTELLTS (91 aa). A helical membrane pass occupies residues 210-230; sequence VGQKLLALAGLLLILVSTGLF. Over 231 to 292 the chain is Cytoplasmic; sequence LKRFLGPCGW…LQLTPKEKKT (62 aa). The chain crosses the membrane as a helical span at residues 293–313; it reads LGLFFLPVLTYLYMWVLFAAV. The Extracellular segment spans residues 314 to 376; it reads DYLLYRLISS…PKPRLSVSET (63 aa). Residues 377–397 traverse the membrane as a helical segment; that stretch reads WVPLSIILLTLIILGLLSSML. Over 398 to 470 the chain is Cytoplasmic; the sequence is MQLKILVSVS…QTIPANEDDL (73 aa).

Interacts with CREB3. Monomer. Homodimer. Isoform 1 interacts (via the C-terminus cytoplasmic tail) with OS9 isoform 1 (via the C-terminus tail); the interaction induces DCSTAMP redistribution to the endoplasmic reticulum-Golgi intermediate compartment. Isoform 1 interacts (via the C-terminus cytoplasmic tail) with OS9 isoform 2 (via the C-terminus tail). In terms of processing, glycosylated. As to expression, expressed in macrophages and bone marrow dendritic cells (BM-DC). Weakly expressed in the spleen and lymph node. Highly expressed in multi-nuclear osteoclasts compared to mono-nuclear macrophages. Expressed in foreign body giant cells (FBGCs). Isoform 1 and isoform 2 are expressed in osteoclasts.

Its subcellular location is the cell membrane. It is found in the endoplasmic reticulum membrane. The protein resides in the endoplasmic reticulum-Golgi intermediate compartment membrane. It localises to the endosome. Its function is as follows. Probable cell surface receptor that plays several roles in cellular fusion, cell differentiation, bone and immune homeostasis. Plays a role in TNFSF11-mediated osteoclastogenesis. Cooperates with OCSTAMP in modulating cell-cell fusion in both osteoclasts and foreign body giant cells (FBGCs). Participates in osteoclast bone resorption. Involved in inducing the expression of tartrate-resistant acid phosphatase in osteoclast precursors. Plays a role in haematopoietic stem cell differentiation of bone marrow cells toward the myeloid lineage. Inhibits the development of neutrophilic granulocytes. Plays also a role in the regulation of dendritic cell (DC) antigen presentation activity by controlling phagocytic activity. Involved in the maintenance of immune self-tolerance and avoidance of autoimmune reactions. This is Dendritic cell-specific transmembrane protein (Dcstamp) from Mus musculus (Mouse).